Consider the following 437-residue polypeptide: Enolase (437 aa).

Gln162 lines the (2R)-2-phosphoglycerate pocket. Catalysis depends on Glu204, which acts as the Proton donor. Mg(2+)-binding residues include Asp251, Glu297, and Asp324. Positions 349, 378, 379, and 400 each coordinate (2R)-2-phosphoglycerate. Lys349 functions as the Proton acceptor in the catalytic mechanism.

Belongs to the enolase family. It depends on Mg(2+) as a cofactor.

The protein resides in the cytoplasm. It is found in the secreted. Its subcellular location is the cell surface. It carries out the reaction (2R)-2-phosphoglycerate = phosphoenolpyruvate + H2O. Its pathway is carbohydrate degradation; glycolysis; pyruvate from D-glyceraldehyde 3-phosphate: step 4/5. Catalyzes the reversible conversion of 2-phosphoglycerate (2-PG) into phosphoenolpyruvate (PEP). It is essential for the degradation of carbohydrates via glycolysis. The protein is Enolase of Chlorobium luteolum (strain DSM 273 / BCRC 81028 / 2530) (Pelodictyon luteolum).